Reading from the N-terminus, the 217-residue chain is Replication-associated protein A (217 aa).

Positions 1-17 are enriched in low complexity; sequence MRAPASSAASNRPGPSN. Residues 1-22 form a disordered region; it reads MRAPASSAASNRPGPSNHPTPR. One can recognise a CRESS-DNA virus Rep endonuclease domain in the interval 22–125; sequence RWNSKQFFLT…NGDSDEMGEL (104 aa). Positions 29-32 match the RCR-1 motif; the sequence is FLTY. The a divalent metal cation site is built by Glu63, His71, and His73. The RCR-2 motif lies at 71-73; that stretch reads HLH. Tyr111 functions as the For DNA cleavage activity in the catalytic mechanism. Positions 111-114 match the RCR-3 motif; sequence YISK. An oligomerization region spans residues 176-188; it reads SAAALFTEPPPVY.

Belongs to the geminiviridae Rep protein family. In terms of assembly, homooligomer. Part of the C- and V-complexes which are RepA-Rep-DNA complexes involved in the c-sense and v-sense transcription.

The protein localises to the host nucleus. It is found in the host cytoplasm. In terms of biological role, implicated in enhancement of V-sense gene expression. Acts a an inhibitor of C-sense gene transcription. In Miscanthus sacchariflorus (MiSV), this protein is Replication-associated protein A.